The following is a 238-amino-acid chain: Glyceraldehyde 3-phosphate phosphatase (238 aa).

Belongs to the HAD-like hydrolase superfamily. Mg(2+) is required as a cofactor.

Its function is as follows. Catalyzes the dephosphorylation of D,L-glyceraldehyde 3-phosphate in vitro. The polypeptide is Glyceraldehyde 3-phosphate phosphatase (Pyrococcus abyssi (strain GE5 / Orsay)).